The sequence spans 506 residues: Glycine--tRNA ligase (506 aa).

Residues Arg99 and Glu189 each contribute to the substrate site. ATP contacts are provided by residues 221-223 (RNE), 231-236 (FRVREL), 306-307 (EI), and 365-368 (GVDR). 236–240 (LEQME) contacts substrate. 361–365 (EPSAG) contacts substrate.

This sequence belongs to the class-II aminoacyl-tRNA synthetase family. As to quaternary structure, homodimer.

Its subcellular location is the cytoplasm. It catalyses the reaction tRNA(Gly) + glycine + ATP = glycyl-tRNA(Gly) + AMP + diphosphate. Its function is as follows. Catalyzes the attachment of glycine to tRNA(Gly). This Deinococcus radiodurans (strain ATCC 13939 / DSM 20539 / JCM 16871 / CCUG 27074 / LMG 4051 / NBRC 15346 / NCIMB 9279 / VKM B-1422 / R1) protein is Glycine--tRNA ligase.